A 79-amino-acid polypeptide reads, in one-letter code: Protein RALF-like 35 (79 aa).

The N-terminal stretch at 1 to 29 (MAAHKMSLTSLFFVSIVIVLSLFSGFGEG) is a signal peptide. Intrachain disulfides connect Cys-45-Cys-52 and Cys-66-Cys-72. Asn-68 carries an N-linked (GlcNAc...) asparagine glycan.

The protein belongs to the plant rapid alkalinization factor (RALF) family.

It localises to the secreted. In terms of biological role, cell signaling peptide that may regulate plant stress, growth, and development. Mediates a rapid alkalinization of extracellular space by mediating a transient increase in the cytoplasmic Ca(2+) concentration leading to a calcium-dependent signaling events through a cell surface receptor and a concomitant activation of some intracellular mitogen-activated protein kinases. The polypeptide is Protein RALF-like 35 (Arabidopsis thaliana (Mouse-ear cress)).